Consider the following 260-residue polypeptide: Pro-thyrotropin-releasing hormone (260 aa).

Positions 1–24 (MPSIQLPVLLLCLTLSGVCLNGRQ) are cleaved as a signal peptide. Positions 72–112 (PQWLSKRQHPGKRYISDPEKRQHPGKRDVEEKASFGDIQKR) are disordered. Position 79 is a pyrrolidone carboxylic acid (Gln79). Pro81 carries the post-translational modification Proline amide. A compositionally biased stretch (basic and acidic residues) spans 85 to 112 (YISDPEKRQHPGKRDVEEKASFGDIQKR). At Gln93 the chain carries Pyrrolidone carboxylic acid. Pro95 carries the post-translational modification Proline amide. Residue Gln113 is modified to Pyrrolidone carboxylic acid. Leu115 is subject to Leucine amide. At Gln134 the chain carries Pyrrolidone carboxylic acid. Pro136 carries the proline amide modification. The residue at position 163 (Gln163) is a Pyrrolidone carboxylic acid. Pro165 bears the Proline amide mark. A compositionally biased stretch (basic and acidic residues) spans 195-207 (KHQQFGNRDRDSD). 2 disordered regions span residues 195 to 217 (KHQQFGNRDRDSDSPDYTGPCDL) and 238 to 260 (KEGVEEKHQHPGRRSAWENETEE). Gln246 carries the pyrrolidone carboxylic acid modification. Proline amide is present on Pro248.

The protein belongs to the TRH family.

It is found in the secreted. Its function is as follows. Functions as a regulator of the biosynthesis of TSH in the anterior pituitary gland and as a neurotransmitter/ neuromodulator in the central and peripheral nervous systems. This Gallus gallus (Chicken) protein is Pro-thyrotropin-releasing hormone (TRH).